Consider the following 23-residue polypeptide: GLLPKVKLVPEQISFILSTRENR.

Belongs to the AB hydrolase superfamily. Lipase family. Contains six disulfide bonds. As to expression, expressed by the venom gland.

It is found in the secreted. The enzyme catalyses a 1,2-diacyl-sn-glycero-3-phosphocholine + H2O = a 2-acyl-sn-glycero-3-phosphocholine + a fatty acid + H(+). The catalysed reaction is 1-(9Z-octadecenoyl)-2-hexadecanoyl-sn-glycero-3-phosphocholine + H2O = 2-hexadecanoyl-sn-glycero-3-phosphocholine + (9Z)-octadecenoate + H(+). It catalyses the reaction a 1-acyl-sn-glycero-3-phosphocholine + H2O = sn-glycerol 3-phosphocholine + a fatty acid + H(+). It participates in phospholipid metabolism. With respect to regulation, activity is maximal in the presence of calcium. However, unlike phospholipases A2 whose catalytic activity is strictly calcium-dependent, this enzyme shows considerable catalytic activity on phosphatidylcholine emulsified in calcium free solution; the catalytic activity of VT-1 assayed in the absence of calcium ions is 18-20% of that assayed in solution containing calcium ions. Its function is as follows. Catalyzes the hydrolysis of glycerophospholipids such as phosphatidylcholine (1,2-diacyl-sn-glycero-3-phosphocholine) and has a moderate activity to hydrolyze lysoglycerophospholipids such as lysophosphatidylcholine (1-acyl-sn-glycero-3-phosphocholine), but is unable to hydrolyze sphingomyelin. Liberates the fatty acid from the sn-1 position of 1,2-diacyl-sn-glycero-3-phosphocholine mainly, indicating phospholipase activity of the A1 type. In addition to acting as an allergen, it possesses a moderate hemolytic activity on red blood cells of mice (3% of hemolysis at 3.0 ug/ml). The chain is Phospholipase A1 verutoxin-1 from Vespa velutina (Asian yellow-legged hornet).